Reading from the N-terminus, the 244-residue chain is Kallikrein-6 (244 aa).

A signal peptide spans 1-16 (MKKLMVVLSLIAAAWA). The propeptide at 17-21 (EEQNK) is activation peptide. The Peptidase S1 domain occupies 22 to 242 (LVHGGPCDKT…YTNWIQKTIQ (221 aa)). Cystine bridges form between C28–C157, C47–C63, C131–C231, C138–C203, C168–C182, and C193–C218. Active-site charge relay system residues include H62 and D106. A glycan (N-linked (GlcNAc...) asparagine) is linked at N134. S197 (charge relay system) is an active-site residue.

Inactivated by autolytic cleavage after Arg-80. In terms of tissue distribution, in fluids, highest levels found in milk of lactating women followed by cerebrospinal fluid, nipple aspirate fluid and breast cyst fluid. Also found in serum, seminal plasma and some amniotic fluids and breast tumor cytosolic extracts. Not detected in urine. At the tissue level, highest concentrations found in glandular tissues such as salivary glands followed by lung, colon, fallopian tube, placenta, breast, pituitary and kidney. Not detected in skin, spleen, bone, thyroid, heart, ureter, liver, muscle, endometrium, testis, pancreas, seminal vesicle, ovary, adrenals and prostate. In brain, detected in gray matter neurons (at protein level). Colocalizes with pathological inclusions such as Lewy bodies and glial cytoplasmic inclusions. Overexpressed in primary breast tumors but not expressed in metastatic tumors.

The protein resides in the secreted. The protein localises to the nucleus. It localises to the nucleolus. Its subcellular location is the cytoplasm. It is found in the mitochondrion. The protein resides in the microsome. Its activity is regulated as follows. Inhibited by a range of serine protease inhibitors including soybean trypsin inhibitor, benzamidine and serpins. Activated by a range of glycosaminoglycans including chondroitin sulfate, dermatan sulfate, heparan sulfate and heparin. Its function is as follows. Serine protease which exhibits a preference for Arg over Lys in the substrate P1 position and for Ser or Pro in the P2 position. Shows activity against amyloid precursor protein, myelin basic protein, gelatin, casein and extracellular matrix proteins such as fibronectin, laminin, vitronectin and collagen. Degrades alpha-synuclein and prevents its polymerization, indicating that it may be involved in the pathogenesis of Parkinson disease and other synucleinopathies. May be involved in regulation of axon outgrowth following spinal cord injury. Tumor cells treated with a neutralizing KLK6 antibody migrate less than control cells, suggesting a role in invasion and metastasis. The chain is Kallikrein-6 (KLK6) from Homo sapiens (Human).